We begin with the raw amino-acid sequence, 187 residues long: Elongation factor P (187 aa).

This sequence belongs to the elongation factor P family.

The protein resides in the cytoplasm. It functions in the pathway protein biosynthesis; polypeptide chain elongation. Involved in peptide bond synthesis. Stimulates efficient translation and peptide-bond synthesis on native or reconstituted 70S ribosomes in vitro. Probably functions indirectly by altering the affinity of the ribosome for aminoacyl-tRNA, thus increasing their reactivity as acceptors for peptidyl transferase. In Magnetococcus marinus (strain ATCC BAA-1437 / JCM 17883 / MC-1), this protein is Elongation factor P.